Here is a 76-residue protein sequence, read N- to C-terminus: Membrane protein UL43 homolog (76 aa).

2 helical membrane-spanning segments follow: residues 7-27 (AVCVVLAAFGYWVAAPISLAF) and 54-74 (ISRWLIVSVYVAAGLCYATII).

Belongs to the alphaherpesvirinae HHV-1 UL43 family.

The protein localises to the membrane. This Equus caballus (Horse) protein is Membrane protein UL43 homolog.